The primary structure comprises 69 residues: UPF0346 protein llmg_2280 (69 aa).

This sequence belongs to the UPF0346 family.

In Lactococcus lactis subsp. cremoris (strain MG1363), this protein is UPF0346 protein llmg_2280.